Reading from the N-terminus, the 506-residue chain is ATP-dependent rRNA helicase RRP3 (506 aa).

Disordered regions lie at residues Met1–Glu22 and Asn37–Phe88. The segment covering Ser49–Val69 has biased composition (acidic residues). Residues Glu86–Ala114 carry the Q motif motif. Residues Ile117–Cys289 form the Helicase ATP-binding domain. Ala130–Thr137 contacts ATP. A DEAD box motif is present at residues Asp236–Asp239. Residues Leu312–Leu460 form the Helicase C-terminal domain. Residues Ile485–Arg506 form a disordered region. Residues Ala496–Arg506 are compositionally biased toward basic and acidic residues.

Belongs to the DEAD box helicase family. DDX47/RRP3 subfamily. In terms of assembly, interacts with the SSU processome.

Its subcellular location is the nucleus. The catalysed reaction is ATP + H2O = ADP + phosphate + H(+). Its function is as follows. ATP-dependent rRNA helicase required for pre-ribosomal RNA processing. Involved in the maturation of the 35S-pre-rRNA and to its cleavage to mature 18S rRNA. This Vanderwaltozyma polyspora (strain ATCC 22028 / DSM 70294 / BCRC 21397 / CBS 2163 / NBRC 10782 / NRRL Y-8283 / UCD 57-17) (Kluyveromyces polysporus) protein is ATP-dependent rRNA helicase RRP3.